The sequence spans 365 residues: WAT1-related protein At4g01440 (365 aa).

The next 10 membrane-spanning stretches (helical) occupy residues 8-28, 40-60, 72-92, 101-121, 132-152, 181-201, 213-233, 249-269, 277-297, and 302-322; these read WTPV…NALV, VIAT…AFFW, ILVQ…YFFL, TLAC…ALIF, AGMG…LLTM, WIIG…WMLI, YSST…LSLI, IVTI…GTSW, IFTS…DFLI, and IFLG…IFLL. EamA domains are found at residues 25-144 and 196-321; these read NALV…LICI and GSWM…YIFL.

This sequence belongs to the drug/metabolite transporter (DMT) superfamily. Plant drug/metabolite exporter (P-DME) (TC 2.A.7.4) family.

The protein resides in the membrane. The sequence is that of WAT1-related protein At4g01440 from Arabidopsis thaliana (Mouse-ear cress).